Here is a 343-residue protein sequence, read N- to C-terminus: Heat-inducible transcription repressor HrcA (343 aa).

It belongs to the HrcA family.

Functionally, negative regulator of class I heat shock genes (grpE-dnaK-dnaJ and groELS operons). Prevents heat-shock induction of these operons. This Clostridium acetobutylicum (strain ATCC 824 / DSM 792 / JCM 1419 / IAM 19013 / LMG 5710 / NBRC 13948 / NRRL B-527 / VKM B-1787 / 2291 / W) protein is Heat-inducible transcription repressor HrcA.